The sequence spans 205 residues: Cytochrome c biogenesis ATP-binding export protein CcmA 1 (205 aa).

Residues 2–205 (LEARDLYCER…LALTGGEAGL (204 aa)) enclose the ABC transporter domain. 34–41 (GGNGAGKT) provides a ligand contact to ATP.

It belongs to the ABC transporter superfamily. CcmA exporter (TC 3.A.1.107) family. As to quaternary structure, the complex is composed of two ATP-binding proteins (CcmA) and two transmembrane proteins (CcmB).

The protein localises to the cell inner membrane. The enzyme catalyses heme b(in) + ATP + H2O = heme b(out) + ADP + phosphate + H(+). Its function is as follows. Part of the ABC transporter complex CcmAB involved in the biogenesis of c-type cytochromes; once thought to export heme, this seems not to be the case, but its exact role is uncertain. Responsible for energy coupling to the transport system. In Salmonella paratyphi A (strain ATCC 9150 / SARB42), this protein is Cytochrome c biogenesis ATP-binding export protein CcmA 1.